A 131-amino-acid chain; its full sequence is Heterochromatin silencing protein rss1 (131 aa).

In terms of assembly, monomer.

It is found in the cytoplasm. The protein localises to the nucleus. In terms of biological role, required for heterochromatin silencing within pericentromeric repeats and at telomers. Facilitates the recruitment of Clr6 histone deacetylase (HDAC) by interacting with histones. Also interacts with Rad25, which mediates heterochromatin silencing in DNA repeats by recruiting the RITS complex. Together with Rad25, forms a regulatory hub that defines heterochromatin silencing within tandem repeats via linking RNAi and HDAC. This chain is Heterochromatin silencing protein rss1 (rss1), found in Schizosaccharomyces pombe (strain 972 / ATCC 24843) (Fission yeast).